The sequence spans 225 residues: U2 small nuclear ribonucleoprotein B'' (225 aa).

Residues 7-86 form the RRM 1 domain; it reads HTIYINNMND…KPMRIQYAKT (80 aa). Positions 99–145 are disordered; sequence ADKEKKKEKKKAKTVEQTATTTNKKPGQGTPNSANTQGNSTPNPQVP. K111 carries the post-translational modification N6-acetyllysine; alternate. K111 participates in a covalent cross-link: Glycyl lysine isopeptide (Lys-Gly) (interchain with G-Cter in SUMO2); alternate. Low complexity predominate over residues 113 to 123; that stretch reads VEQTATTTNKK. Positions 127-141 are enriched in polar residues; the sequence is GTPNSANTQGNSTPN. Residue Y151 is modified to Phosphotyrosine. Residues 151–225 form the RRM 2 domain; it reads YILFLNNLPE…HAMKITYAKK (75 aa).

It belongs to the RRM U1 A/B'' family. As to quaternary structure, identified in the spliceosome B complex. Identified in the spliceosome C complex. Present in a spliceosome complex assembled in vitro, and composed of SNRPB2, HPRP8BP and CRNKL1. Contributes to the binding of stem loop IV of U2 snRNA with SNRPP1.

Its subcellular location is the nucleus. Its function is as follows. Involved in pre-mRNA splicing as component of the spliceosome. Associated with sn-RNP U2, where it contributes to the binding of stem loop IV of U2 snRNA. The polypeptide is U2 small nuclear ribonucleoprotein B'' (SNRPB2) (Homo sapiens (Human)).